The chain runs to 105 residues: Integration host factor subunit beta (105 aa).

It belongs to the bacterial histone-like protein family. In terms of assembly, heterodimer of an alpha and a beta chain.

Its function is as follows. This protein is one of the two subunits of integration host factor, a specific DNA-binding protein that functions in genetic recombination as well as in transcriptional and translational control. This chain is Integration host factor subunit beta, found in Bradyrhizobium sp. (strain ORS 278).